The primary structure comprises 75 residues: Meucin-49 (75 aa).

Residues 1 to 22 form the signal peptide; it reads MNKKILLVIFIVTMLIVDEVNS.

It belongs to the non-disulfide-bridged peptide (NDBP) superfamily. Long chain multifunctional peptide (group 2) family. In terms of tissue distribution, expressed by the venom gland.

The protein localises to the secreted. Its function is as follows. Insecticidal toxin and antimicrobial peptide with potent activity against both Gram-negative and -positive bacteria, as well as against fungi. Acts by disrupting bacterial membrane integrity. Shows broad-spectrum and highly potent bactericidal activities against the Gram-positive bacteria B.cereus, B.megaterium, B.subtilis, M.luteus, S.aureus, S.epidermidis, S.warneri, S.griseus, S.scabiei, S.mutans, S.salivarius, and S.sanguinis. Also exhibits a wide spectrum of activity against the Gram-negative bacteria A.faecalis, E.coli, P.aeruginosa, P.solanacearum, S.enterica, S.marcescens, and S.maltophilia. Also shows antimicrobial activities against the fungal strains Aspergillus flavus, A.fumigatus, A.nidulans, A.niger, Beauveria bassiana, and Saccharomyces cerevisiae. Its antibiotic activity is potentiated by other antibacterial peptides such as MeuNaTxbeta-4. Also induces cytolysis on mice, lizards and birds erythrocytes. This chain is Meucin-49, found in Mesobuthus eupeus (Lesser Asian scorpion).